The chain runs to 182 residues: Ribosome-recycling factor (182 aa).

This sequence belongs to the RRF family.

It is found in the cytoplasm. Responsible for the release of ribosomes from messenger RNA at the termination of protein biosynthesis. May increase the efficiency of translation by recycling ribosomes from one round of translation to another. The protein is Ribosome-recycling factor of Gloeobacter violaceus (strain ATCC 29082 / PCC 7421).